We begin with the raw amino-acid sequence, 229 residues long: Potassium/proton antiporter CemA (229 aa).

3 helical membrane-spanning segments follow: residues 7–27 (FSPI…YLSF), 106–126 (MILR…FYIW), and 189–209 (IISG…KYWI).

Belongs to the CemA family.

It localises to the plastid membrane. It catalyses the reaction K(+)(in) + H(+)(out) = K(+)(out) + H(+)(in). In terms of biological role, may be involved in proton extrusion. The protein is Potassium/proton antiporter CemA of Cuscuta reflexa (Southern Asian dodder).